The following is a 120-amino-acid chain: NAD(P)H-quinone oxidoreductase subunit 3, chloroplastic (120 aa).

3 helical membrane passes run 7–27, 64–84, and 88–108; these read YDTFWIYLSISSLIPILAFSI, MFALVFVVFDVETVFLYPWAM, and ILGLFTFIEAFIFVIILIVGL.

Belongs to the complex I subunit 3 family. NDH is composed of at least 16 different subunits, 5 of which are encoded in the nucleus.

The protein localises to the plastid. Its subcellular location is the chloroplast thylakoid membrane. The catalysed reaction is a plastoquinone + NADH + (n+1) H(+)(in) = a plastoquinol + NAD(+) + n H(+)(out). It catalyses the reaction a plastoquinone + NADPH + (n+1) H(+)(in) = a plastoquinol + NADP(+) + n H(+)(out). In terms of biological role, NDH shuttles electrons from NAD(P)H:plastoquinone, via FMN and iron-sulfur (Fe-S) centers, to quinones in the photosynthetic chain and possibly in a chloroplast respiratory chain. The immediate electron acceptor for the enzyme in this species is believed to be plastoquinone. Couples the redox reaction to proton translocation, and thus conserves the redox energy in a proton gradient. This Cryptomeria japonica (Japanese cedar) protein is NAD(P)H-quinone oxidoreductase subunit 3, chloroplastic.